Reading from the N-terminus, the 217-residue chain is KH domain-containing protein 3 (217 aa).

The segment at 1–40 is involved in RNA binding; the sequence is MDAPRRFPTLVQLMQPKAMPVEVLGHLPKRFSWFHSEFLK. A KH; atypical domain is found at 40–103; that stretch reads KNPKVVRLEV…SYQEDTIKMI (64 aa). The tract at residues 129-217 is disordered; sequence QKAETQRSSI…EDARDPVTRL (89 aa). The span at 138-155 shows a compositional bias: basic and acidic residues; the sequence is IEVREAGTQRSVEVREAG. Phosphothreonine; by ATM is present on residues threonine 145 and threonine 156. 2 stretches are compositionally biased toward polar residues: residues 156 to 170 and 177 to 194; these read TQRSVEVQEVGTQGS and AGTQQSLQAANKSGTQRS. A Phosphoserine modification is found at serine 182. Positions 205 to 217 are enriched in basic and acidic residues; that stretch reads RFREDARDPVTRL.

This sequence belongs to the KHDC1 family. As to quaternary structure, component of the subcortical maternal complex (SCMC), at least composed of NLRP5, KHDC3L, OOEP, and TLE6 isoform 1. Within the complex, interacts with NLRP5, KHDC3L and TLE6 isoform 1. The SCMC may facilitate translocation of its components between the nuclear and cytoplasmic compartments. Forms a scaffold complex with OOEP/FLOPED, and interacts with BLM and TRIM25 at DNA replication forks. Interacts with PARP1; the interaction is increased following the formation of DNA double-strand breaks. Interacts with NUMA1. Expression appears to be maximal in germinal vesicle oocytes, it tails off through metaphase II oocytes and is undetectable following the completion of the oocyte to embryo transition.

Its subcellular location is the cytoplasm. The protein localises to the cell cortex. It localises to the nucleus. It is found in the mitochondrion. The protein resides in the cytoskeleton. Its subcellular location is the microtubule organizing center. The protein localises to the centrosome. It localises to the chromosome. Component of the subcortical maternal complex (SCMC), a multiprotein complex that plays a key role in early embryonic development. The SCMC complex is a structural constituent of cytoplasmic lattices, which consist in fibrous structures found in the cytoplasm of oocytes and preimplantation embryos. They are required to store maternal proteins critical for embryonic development, such as proteins that control epigenetic reprogramming of the preimplantation embryo, and prevent their degradation or activation. KHDC3 ensures proper spindle assembly by regulating the localization of AURKA via RHOA signaling and of PLK1 via a RHOA-independent process. Required for the localization of MAD2L1 to kinetochores to enable spindle assembly checkpoint function. As part of the OOEP-KHDC3 scaffold, recruits BLM and TRIM25 to DNA replication forks, thereby promoting the ubiquitination of BLM by TRIM25, enhancing BLM retainment at replication forks and therefore promoting stalled replication fork restart. Regulates homologous recombination-mediated DNA repair via recruitment of RAD51 to sites of DNA double-strand breaks, and sustainment of PARP1 activity, which in turn modulates downstream ATM or ATR activation. Activation of ATM or ATR in response to DNA double-strand breaks may be cell-type specific. Its role in DNA double-strand break repair is independent of its role in restarting stalled replication forks. Promotes neural stem cell neurogenesis and neuronal differentiation in the hippocampus. May regulate normal development of learning, memory and anxiety. Capable of binding RNA. The sequence is that of KH domain-containing protein 3 from Homo sapiens (Human).